A 340-amino-acid chain; its full sequence is Citramalyl-CoA lyase, mitochondrial (340 aa).

The N-terminal 22 residues, 1-22, are a transit peptide targeting the mitochondrion; it reads MALRLLRRAARGAAAAALLRLK. Residues tyrosine 50, lysine 57, and lysine 61 each coordinate substrate. 2 positions are modified to N6-acetyllysine: lysine 57 and lysine 61. N6-acetyllysine; alternate occurs at positions 82 and 92. Lysine 82 and lysine 92 each carry N6-succinyllysine; alternate. Residue arginine 107 participates in substrate binding. Positions 171 and 206 each coordinate Mg(2+). 272–273 provides a ligand contact to substrate; it reads IH. At lysine 309 the chain carries N6-succinyllysine. Aspartate 320 is an active-site residue.

The protein belongs to the HpcH/HpaI aldolase family. Citrate lyase beta subunit-like subfamily. As to quaternary structure, homotrimer. It depends on Mg(2+) as a cofactor.

It localises to the mitochondrion. It catalyses the reaction glyoxylate + acetyl-CoA + H2O = (S)-malate + CoA + H(+). The catalysed reaction is propanoyl-CoA + glyoxylate + H2O = 3-methylmalate + CoA + H(+). It carries out the reaction (3S)-citramalyl-CoA = pyruvate + acetyl-CoA. The enzyme catalyses (S)-malyl-CoA + H2O = (S)-malate + CoA + H(+). In terms of biological role, mitochondrial citramalyl-CoA lyase indirectly involved in the vitamin B12 metabolism. Converts citramalyl-CoA into acetyl-CoA and pyruvate in the C5-dicarboxylate catabolism pathway. The C5-dicarboxylate catabolism pathway is required to detoxify itaconate, a vitamin B12-poisoning metabolite. Also acts as a malate synthase in vitro, converting glyoxylate and acetyl-CoA to malate. Also displays malyl-CoA thioesterase activity. Also acts as a beta-methylmalate synthase in vitro, by mediating conversion of glyoxylate and propionyl-CoA to beta-methylmalate. Also has very weak citramalate synthase activity in vitro. This is Citramalyl-CoA lyase, mitochondrial from Homo sapiens (Human).